The chain runs to 278 residues: Probable endonuclease LCL3 (278 aa).

A helical transmembrane segment spans residues 15–37; it reads FSSDVVLLSLLISGSTLGAIAGY. The TNase-like domain occupies 58 to 263; sequence RWMYGKVTAV…KAKKRGLWRQ (206 aa). Arg-154 is an active-site residue. Asp-159 is a Ca(2+) binding site. Catalysis depends on residues Glu-162 and Arg-202.

It belongs to the LCL3 family.

The protein resides in the mitochondrion. The protein localises to the membrane. The protein is Probable endonuclease LCL3 (LCL3) of Vanderwaltozyma polyspora (strain ATCC 22028 / DSM 70294 / BCRC 21397 / CBS 2163 / NBRC 10782 / NRRL Y-8283 / UCD 57-17) (Kluyveromyces polysporus).